Consider the following 474-residue polypeptide: Cobyric acid synthase (474 aa).

The region spanning 251–431 (TGFVAIPRLP…LHGLLENSAY (181 aa)) is the GATase cobBQ-type domain. Cysteine 328 serves as the catalytic Nucleophile. Residue histidine 423 is part of the active site.

The protein belongs to the CobB/CobQ family. CobQ subfamily.

It functions in the pathway cofactor biosynthesis; adenosylcobalamin biosynthesis. Functionally, catalyzes amidations at positions B, D, E, and G on adenosylcobyrinic A,C-diamide. NH(2) groups are provided by glutamine, and one molecule of ATP is hydrogenolyzed for each amidation. The polypeptide is Cobyric acid synthase (Deinococcus radiodurans (strain ATCC 13939 / DSM 20539 / JCM 16871 / CCUG 27074 / LMG 4051 / NBRC 15346 / NCIMB 9279 / VKM B-1422 / R1)).